The primary structure comprises 601 residues: Amino-acid acetyltransferase, mitochondrial (601 aa).

An N-acetyltransferase domain is found at 401 to 558; sequence FTMDNLIASK…KKKQNNKKKK (158 aa).

The protein belongs to the acetyltransferase family.

Its subcellular location is the mitochondrion. It carries out the reaction L-glutamate + acetyl-CoA = N-acetyl-L-glutamate + CoA + H(+). Its pathway is amino-acid biosynthesis; L-arginine biosynthesis; N(2)-acetyl-L-ornithine from L-glutamate: step 1/4. N-acetylglutamate synthase involved in arginine biosynthesis. This Lodderomyces elongisporus (strain ATCC 11503 / CBS 2605 / JCM 1781 / NBRC 1676 / NRRL YB-4239) (Yeast) protein is Amino-acid acetyltransferase, mitochondrial (ARG2).